A 250-amino-acid chain; its full sequence is Hydroxyethylthiazole kinase (250 aa).

Residue Met-39 participates in substrate binding. Residues Arg-114 and Thr-159 each coordinate ATP. Gly-186 serves as a coordination point for substrate.

The protein belongs to the Thz kinase family. It depends on Mg(2+) as a cofactor.

The catalysed reaction is 5-(2-hydroxyethyl)-4-methylthiazole + ATP = 4-methyl-5-(2-phosphooxyethyl)-thiazole + ADP + H(+). It functions in the pathway cofactor biosynthesis; thiamine diphosphate biosynthesis; 4-methyl-5-(2-phosphoethyl)-thiazole from 5-(2-hydroxyethyl)-4-methylthiazole: step 1/1. Catalyzes the phosphorylation of the hydroxyl group of 4-methyl-5-beta-hydroxyethylthiazole (THZ). This Lactococcus lactis subsp. lactis (strain IL1403) (Streptococcus lactis) protein is Hydroxyethylthiazole kinase.